The primary structure comprises 440 residues: Proline--tRNA ligase (440 aa).

Belongs to the class-II aminoacyl-tRNA synthetase family. ProS type 2 subfamily. Homodimer.

It is found in the cytoplasm. It catalyses the reaction tRNA(Pro) + L-proline + ATP = L-prolyl-tRNA(Pro) + AMP + diphosphate. Its function is as follows. Catalyzes the attachment of proline to tRNA(Pro) in a two-step reaction: proline is first activated by ATP to form Pro-AMP and then transferred to the acceptor end of tRNA(Pro). This is Proline--tRNA ligase from Methylocella silvestris (strain DSM 15510 / CIP 108128 / LMG 27833 / NCIMB 13906 / BL2).